The primary structure comprises 644 residues: Protein ecdysoneless homolog (644 aa).

Disordered stretches follow at residues 430-449 (AVGK…QNYD), 496-537 (LGPR…SLKG), 567-589 (QVEP…TGES), and 623-644 (QSMG…PTKN). Residues 431–447 (VGKKESESVSKEEKEQN) show a composition bias toward basic and acidic residues. Positions 439–644 (VSKEEKEQNY…HRPTSKPTKN (206 aa)) are transcription activation. An involved in nuclear export region spans residues 481-497 (ITFDADSFLNYFDKILG). Residues 502–532 (ESDSDDLDDEDFECLDSDDDLDFETHEPGEE) are acidic region required for transactivation activity. Residues S503, S505, and S518 each carry the phosphoserine modification. The span at 503-523 (SDSDDLDDEDFECLDSDDDLD) shows a compositional bias: acidic residues. Basic and acidic residues predominate over residues 524–534 (FETHEPGEEAS). The span at 567 to 577 (QVEPVSQTTDN) shows a compositional bias: polar residues.

Belongs to the ECD family. Interacts with TP53, MDM2, TXNIP. Interacts (phosphorylated) with PIH1D1. Interacts with RUVBL1 mediating the PIH1D1-independent association with the R2TP complex. Interacts with RB1, RBL1 and RBL2; ECD competes with E2F1 for binding to hypophospshorylated RB1. Interacts with EP300. Interacts with DDX39A. Post-translationally, phosphorylated predominantly by CK2 on two serine-containing clusters; involved in cell cycle regulation activity. In terms of tissue distribution, highly expressed in muscle and heart. Over-expressed in pancreatic and breast cancers.

The protein localises to the cytoplasm. The protein resides in the nucleus. Functionally, regulator of p53/TP53 stability and function. Inhibits MDM2-mediated degradation of p53/TP53 possibly by cooperating in part with TXNIP. May be involved transcriptional regulation. In vitro has intrinsic transactivation activity enhanced by EP300. May be a transcriptional activator required for the expression of glycolytic genes. Involved in regulation of cell cycle progression. Proposed to disrupt Rb-E2F binding leading to transcriptional activation of E2F proteins. The cell cycle -regulating function may depend on its RUVBL1-mediated association with the R2TP complex. May play a role in regulation of pre-mRNA splicing. Participates together with DDX39A in mRNA nuclear export. This is Protein ecdysoneless homolog (ECD) from Homo sapiens (Human).